The sequence spans 273 residues: DNA repair protein RecO (273 aa).

The segment at 249 to 273 (GRSLTEEPELKAEQTEAEKESQRPR) is disordered. The segment covering 252 to 273 (LTEEPELKAEQTEAEKESQRPR) has biased composition (basic and acidic residues).

It belongs to the RecO family.

Its function is as follows. Involved in DNA repair and RecF pathway recombination. This Heliobacterium modesticaldum (strain ATCC 51547 / Ice1) protein is DNA repair protein RecO.